The following is a 235-amino-acid chain: Pyridoxine 5'-phosphate synthase (235 aa).

Residue N6 coordinates 3-amino-2-oxopropyl phosphate. Residue 8-9 (DH) coordinates 1-deoxy-D-xylulose 5-phosphate. Residue R17 coordinates 3-amino-2-oxopropyl phosphate. Residue H42 is the Proton acceptor of the active site. The 1-deoxy-D-xylulose 5-phosphate site is built by R44 and H49. Residue E69 is the Proton acceptor of the active site. 1-deoxy-D-xylulose 5-phosphate is bound at residue T99. Catalysis depends on H188, which acts as the Proton donor. 3-amino-2-oxopropyl phosphate contacts are provided by residues G189 and 210 to 211 (GH).

It belongs to the PNP synthase family. In terms of assembly, homooctamer; tetramer of dimers.

It localises to the cytoplasm. The catalysed reaction is 3-amino-2-oxopropyl phosphate + 1-deoxy-D-xylulose 5-phosphate = pyridoxine 5'-phosphate + phosphate + 2 H2O + H(+). It functions in the pathway cofactor biosynthesis; pyridoxine 5'-phosphate biosynthesis; pyridoxine 5'-phosphate from D-erythrose 4-phosphate: step 5/5. Functionally, catalyzes the complicated ring closure reaction between the two acyclic compounds 1-deoxy-D-xylulose-5-phosphate (DXP) and 3-amino-2-oxopropyl phosphate (1-amino-acetone-3-phosphate or AAP) to form pyridoxine 5'-phosphate (PNP) and inorganic phosphate. This chain is Pyridoxine 5'-phosphate synthase, found in Wolbachia sp. subsp. Drosophila simulans (strain wRi).